Here is a 197-residue protein sequence, read N- to C-terminus: Probable GTP-binding protein EngB (197 aa).

The region spanning 22–195 is the EngB-type G domain; sequence QLPELALAGR…WRTILNHLKV (174 aa). Residues 30–37, 57–61, 75–78, 142–145, and 174–176 each bind GTP; these read GRSNVGKS, GKTQT, DVPG, TKAD, and FSS. Residues serine 37 and threonine 59 each coordinate Mg(2+).

Belongs to the TRAFAC class TrmE-Era-EngA-EngB-Septin-like GTPase superfamily. EngB GTPase family. Requires Mg(2+) as cofactor.

Necessary for normal cell division and for the maintenance of normal septation. In Shouchella clausii (strain KSM-K16) (Alkalihalobacillus clausii), this protein is Probable GTP-binding protein EngB.